We begin with the raw amino-acid sequence, 49 residues long: Large ribosomal subunit protein bL33B (49 aa).

The protein belongs to the bacterial ribosomal protein bL33 family.

The sequence is that of Large ribosomal subunit protein bL33B (rpmG2) from Listeria innocua serovar 6a (strain ATCC BAA-680 / CLIP 11262).